The primary structure comprises 125 residues: Small ribosomal subunit protein uS12 (125 aa).

At D89 the chain carries 3-methylthioaspartic acid.

The protein belongs to the universal ribosomal protein uS12 family. In terms of assembly, part of the 30S ribosomal subunit. Contacts proteins S8 and S17. May interact with IF1 in the 30S initiation complex.

Functionally, with S4 and S5 plays an important role in translational accuracy. In terms of biological role, interacts with and stabilizes bases of the 16S rRNA that are involved in tRNA selection in the A site and with the mRNA backbone. Located at the interface of the 30S and 50S subunits, it traverses the body of the 30S subunit contacting proteins on the other side and probably holding the rRNA structure together. The combined cluster of proteins S8, S12 and S17 appears to hold together the shoulder and platform of the 30S subunit. The chain is Small ribosomal subunit protein uS12 from Cupriavidus necator (strain ATCC 17699 / DSM 428 / KCTC 22496 / NCIMB 10442 / H16 / Stanier 337) (Ralstonia eutropha).